Reading from the N-terminus, the 147-residue chain is UPF0251 protein CTC_01373 (147 aa).

It belongs to the UPF0251 family.

The sequence is that of UPF0251 protein CTC_01373 from Clostridium tetani (strain Massachusetts / E88).